Reading from the N-terminus, the 468-residue chain is 3-isopropylmalate dehydratase large subunit (468 aa).

Positions 347, 407, and 410 each coordinate [4Fe-4S] cluster.

It belongs to the aconitase/IPM isomerase family. LeuC type 1 subfamily. In terms of assembly, heterodimer of LeuC and LeuD. Requires [4Fe-4S] cluster as cofactor.

The enzyme catalyses (2R,3S)-3-isopropylmalate = (2S)-2-isopropylmalate. It functions in the pathway amino-acid biosynthesis; L-leucine biosynthesis; L-leucine from 3-methyl-2-oxobutanoate: step 2/4. Its function is as follows. Catalyzes the isomerization between 2-isopropylmalate and 3-isopropylmalate, via the formation of 2-isopropylmaleate. The polypeptide is 3-isopropylmalate dehydratase large subunit (Campylobacter jejuni subsp. jejuni serotype O:23/36 (strain 81-176)).